The following is a 522-amino-acid chain: Peptide methionine sulfoxide reductase MsrA/MsrB (522 aa).

Residues 17-174 enclose the Thioredoxin domain; the sequence is LALGACSPKI…ALALIRDPNA (158 aa). C68 and C71 are joined by a disulfide. The segment at 199-354 is peptide methionine sulfoxide reductase A; it reads RTIYLAGGCF…PNGYCHIDIR (156 aa). Residue C207 is part of the active site. A MsrB domain is found at 383-506; the sequence is DAELKRTLTE…NGASLKFIPL (124 aa). C440 and C495 are joined by a disulfide. Residue C495 is the Nucleophile of the active site.

This sequence in the N-terminal section; belongs to the thioredoxin family. The protein in the central section; belongs to the MsrA Met sulfoxide reductase family. In the C-terminal section; belongs to the MsrB Met sulfoxide reductase family.

It carries out the reaction L-methionyl-[protein] + [thioredoxin]-disulfide + H2O = L-methionyl-(S)-S-oxide-[protein] + [thioredoxin]-dithiol. The enzyme catalyses [thioredoxin]-disulfide + L-methionine + H2O = L-methionine (S)-S-oxide + [thioredoxin]-dithiol. It catalyses the reaction L-methionyl-[protein] + [thioredoxin]-disulfide + H2O = L-methionyl-(R)-S-oxide-[protein] + [thioredoxin]-dithiol. In terms of biological role, has an important function as a repair enzyme for proteins that have been inactivated by oxidation. Catalyzes the reversible oxidation-reduction of methionine sulfoxide in proteins to methionine. In Neisseria meningitidis serogroup B (strain ATCC BAA-335 / MC58), this protein is Peptide methionine sulfoxide reductase MsrA/MsrB (msrAB).